A 586-amino-acid chain; its full sequence is Actin-related protein 9 (586 aa).

The segment at S141–N169 is disordered.

It belongs to the actin family. ARP8 subfamily.

This chain is Actin-related protein 9 (ARP9), found in Oryza sativa subsp. indica (Rice).